The following is a 102-amino-acid chain: MPGQKIRIRLKAYDHKLLDESAKKIVEVVKQTNAKVSGPVPLPTERTLYVVLRSPLKHKDSREQFEKRVHKRMIDILEPSPKTIDALMKINLPAGVDVEINL.

It belongs to the universal ribosomal protein uS10 family. Part of the 30S ribosomal subunit.

In terms of biological role, involved in the binding of tRNA to the ribosomes. The polypeptide is Small ribosomal subunit protein uS10 (Thermosipho melanesiensis (strain DSM 12029 / CIP 104789 / BI429)).